A 943-amino-acid polypeptide reads, in one-letter code: Isoleucine--tRNA ligase (943 aa).

A 'HIGH' region motif is present at residues P59–H69. Residue E577 participates in L-isoleucyl-5'-AMP binding. Positions K618–S622 match the 'KMSKS' region motif. K621 is an ATP binding site. The Zn(2+) site is built by C906, C909, C926, and C929.

The protein belongs to the class-I aminoacyl-tRNA synthetase family. IleS type 1 subfamily. As to quaternary structure, monomer. It depends on Zn(2+) as a cofactor.

Its subcellular location is the cytoplasm. It catalyses the reaction tRNA(Ile) + L-isoleucine + ATP = L-isoleucyl-tRNA(Ile) + AMP + diphosphate. In terms of biological role, catalyzes the attachment of isoleucine to tRNA(Ile). As IleRS can inadvertently accommodate and process structurally similar amino acids such as valine, to avoid such errors it has two additional distinct tRNA(Ile)-dependent editing activities. One activity is designated as 'pretransfer' editing and involves the hydrolysis of activated Val-AMP. The other activity is designated 'posttransfer' editing and involves deacylation of mischarged Val-tRNA(Ile). This chain is Isoleucine--tRNA ligase, found in Xylella fastidiosa (strain 9a5c).